The primary structure comprises 768 residues: Calcium up-regulated protein G (768 aa).

The disordered stretch occupies residues 1-22; that stretch reads MINIEDISKSSNQSEEKQLKST. Ricin B-type lectin domains lie at 1 to 107 and 100 to 248; these read MINI…WTID and KTQI…WGIN.

Belongs to the cup family.

It localises to the cytoplasm. The protein localises to the membrane. Its function is as follows. May play an important role in stabilizing and/or regulating the cell membrane during Ca(2+) stress or certain stages of development. This Dictyostelium discoideum (Social amoeba) protein is Calcium up-regulated protein G (cupG).